Consider the following 315-residue polypeptide: MEEAILLNQTSLVTYFRLRGLSVNHKARIAMFSMFLIFYVLTLIGNVLIVITIIYDHRLHTPMYFFLSNLSFIDVCHSTVTVPKMLRDVWSEEKLISFDACVTQMFFLHLFACTEIFLLTVMAYDRYVAICKPLQYMIVMNWKVCVLLAVALWTGGTIHSIALTSLTIKLPYCGPDEIDNFFCDVPQVIKLACIDTHVIEILIVSNSGLISVVCFVVLVVSYAVILVSLRQQISKGKRKALSTCAAHLTVVTLFLGHCIFIYSRPSTSLPEDKVVSVFFTAVTPLLNPIIYTLRNEEMKSALNKLVGRKERKEEK.

Topologically, residues M1–S33 are extracellular. N8 carries an N-linked (GlcNAc...) asparagine glycan. A helical membrane pass occupies residues M34 to I54. The Cytoplasmic portion of the chain corresponds to Y55–T61. Residues P62 to V82 traverse the membrane as a helical segment. Topologically, residues P83–C101 are extracellular. Residues C101 and C183 are joined by a disulfide bond. Residues V102–M122 form a helical membrane-spanning segment. At A123–K143 the chain is on the cytoplasmic side. Residues V144–T164 traverse the membrane as a helical segment. Residues S165–G208 lie on the Extracellular side of the membrane. The chain crosses the membrane as a helical span at residues L209 to L229. Over R230–A240 the chain is Cytoplasmic. Residues L241–I261 form a helical membrane-spanning segment. Residues Y262–D272 lie on the Extracellular side of the membrane. Residues K273–L293 traverse the membrane as a helical segment. Residues R294–K315 are Cytoplasmic-facing.

Belongs to the G-protein coupled receptor 1 family.

The protein localises to the cell membrane. In terms of biological role, odorant receptor. The protein is Olfactory receptor 4E1 (OR4E1) of Homo sapiens (Human).